Here is a 25-residue protein sequence, read N- to C-terminus: Ocellatin-L1 (25 aa).

The residue at position 25 (Leu-25) is a Leucine amide.

The protein belongs to the frog skin active peptide (FSAP) family. Ocellatin subfamily. In terms of tissue distribution, expressed by the skin glands.

It is found in the secreted. Its function is as follows. Antimicrobial peptide with activity against Gram-negative bacteria but without activity against Gram-positive bacteria. Shows a low activity in stimulating insulin release from rat BRIN-BD11 beta cells, and acts without loss of integrity of the plasma membrane. Has very low hemolytic activity. Shows weak amphipathicity in its alpha-helical conformation. The polypeptide is Ocellatin-L1 (Leptodactylus laticeps (Santa Fe frog)).